The sequence spans 565 residues: Deformed epidermal autoregulatory factor 1 homolog (565 aa).

Disordered stretches follow at residues 34–62 (GGEA…ETPR) and 162–190 (GLKG…KGGT). Residues 169–181 (PLTPGPQSPPTPL) show a composition bias toward pro residues. Thr171 carries the phosphothreonine modification. Residue Ser176 is modified to Phosphoserine. Residue Thr179 is modified to Phosphothreonine. An SAND domain is found at 193 to 273 (NWDPSVYDSE…QCLIQDGILN (81 aa)). Residues 301-316 (KRRKKENELPTTPVKK) carry the Nuclear localization signal motif. Residues 403 to 478 (IAPFPEAALP…QLKTLFEQAK (76 aa)) are interaction with LMO4. Thr432 bears the Phosphothreonine mark. Residue Ser448 is modified to Phosphoserine. The Zn(2+) site is built by Cys504, Cys507, Cys515, Cys518, Cys524, Cys528, His536, and Cys540. An MYND-type zinc finger spans residues 504–540 (CVNCGREAMSECTGCHKVNYCSTFCQRKDWKDHQHIC).

As to quaternary structure, homodimer. Isoform 1 and isoform 4 may form a heterodimer. Interacts with LMO2 and CLIM2. Interacts with LMO4; LMO4 blocks export from nucleus. May interact with the corepressors NCOR1 and NCRO2. Identified in a complex with the XRCC5 and XRCC6 heterodimer. Interacts (via the SAND domain) with the DNA-PK complex subunit XRCC6; the interaction is direct and may be inhibited by DNA-binding. Post-translationally, may be phosphorylated by DNA-PK complex in a DNA independent manner (in vitro). As to expression, expressed in various tissues and cells such as in peripheral mononuclear cells and hormone-secreting pituitary cells. Expression in pancreatic lymph nodes of patients with type 1 diabetes is 20 times higher than in healthy controls. Highly expressed in fetal and adult brain.

It localises to the nucleus. The protein localises to the cytoplasm. Its subcellular location is the secreted. Its function is as follows. Transcription factor that binds to sequence with multiple copies of 5'-TTC[CG]G-3' present in its own promoter and that of the HNRPA2B1 gene. Down-regulates transcription of these genes. Binds to the retinoic acid response element (RARE) 5'-AGGGTTCACCGAAAGTTCA-3'. Activates the proenkephalin gene independently of promoter binding, probably through protein-protein interaction. When secreted, behaves as an inhibitor of cell proliferation, by arresting cells in the G0 or G1 phase. Required for neural tube closure and skeletal patterning. Regulates epithelial cell proliferation and side-branching in the mammary gland. Controls the expression of peripheral tissue antigens in pancreatic lymph nodes. Isoform 1 displays greater transcriptional activity than isoform 4. Isoform 4 may inhibit transcriptional activity of isoform 1 by interacting with isoform 1 and retaining it in the cytoplasm. Transcriptional activator of EIF4G3. In Homo sapiens (Human), this protein is Deformed epidermal autoregulatory factor 1 homolog (DEAF1).